A 547-amino-acid chain; its full sequence is Chaperonin GroEL (547 aa).

ATP contacts are provided by residues 30–33 (TLGP), lysine 51, 87–91 (DGTTT), glycine 415, 479–481 (NAA), and aspartate 495.

It belongs to the chaperonin (HSP60) family. In terms of assembly, forms a cylinder of 14 subunits composed of two heptameric rings stacked back-to-back. Interacts with the co-chaperonin GroES.

The protein resides in the cytoplasm. It carries out the reaction ATP + H2O + a folded polypeptide = ADP + phosphate + an unfolded polypeptide.. Together with its co-chaperonin GroES, plays an essential role in assisting protein folding. The GroEL-GroES system forms a nano-cage that allows encapsulation of the non-native substrate proteins and provides a physical environment optimized to promote and accelerate protein folding. This chain is Chaperonin GroEL, found in Pseudomonas savastanoi pv. phaseolicola (strain 1448A / Race 6) (Pseudomonas syringae pv. phaseolicola (strain 1448A / Race 6)).